A 317-amino-acid chain; its full sequence is Large ribosomal subunit protein uL10 (317 aa).

It belongs to the universal ribosomal protein uL10 family. P0 forms a pentameric complex by interaction with dimers of P1 and P2. Post-translationally, phosphorylated.

Its function is as follows. Ribosomal protein P0 is the functional equivalent of E.coli protein L10. The sequence is that of Large ribosomal subunit protein uL10 (rplp0) from Ictalurus punctatus (Channel catfish).